Reading from the N-terminus, the 137-residue chain is Nucleoside diphosphate kinase (137 aa).

The ATP site is built by Lys9, Phe57, Arg85, Thr91, Arg102, and Asn112. His115 functions as the Pros-phosphohistidine intermediate in the catalytic mechanism.

It belongs to the NDK family. As to quaternary structure, homotetramer. Mg(2+) is required as a cofactor.

Its subcellular location is the cytoplasm. The enzyme catalyses a 2'-deoxyribonucleoside 5'-diphosphate + ATP = a 2'-deoxyribonucleoside 5'-triphosphate + ADP. The catalysed reaction is a ribonucleoside 5'-diphosphate + ATP = a ribonucleoside 5'-triphosphate + ADP. Its function is as follows. Major role in the synthesis of nucleoside triphosphates other than ATP. The ATP gamma phosphate is transferred to the NDP beta phosphate via a ping-pong mechanism, using a phosphorylated active-site intermediate. This Sulfurovum sp. (strain NBC37-1) protein is Nucleoside diphosphate kinase.